Here is a 296-residue protein sequence, read N- to C-terminus: m7GpppN-mRNA hydrolase NUDT17 (296 aa).

The 147-residue stretch at 90–236 (GRGVDVGVAV…DSGSPCGPLP (147 aa)) folds into the Nudix hydrolase domain. Residues 129 to 150 (GHVELGEQLLEAGLRELQEETG) carry the Nudix box motif. Positions 144 and 148 each coordinate Mg(2+).

Belongs to the Nudix hydrolase family. Requires Mg(2+) as cofactor. The cofactor is Mn(2+).

It catalyses the reaction a 5'-end (N(7)-methyl 5'-triphosphoguanosine)-ribonucleoside in mRNA + H2O = N(7)-methyl-GDP + a 5'-end phospho-ribonucleoside in mRNA + 2 H(+). Acts as a decapping enzyme capable of hydrolyzing monomethylated capped RNAs (in vitro). Hydrolyzes monomethylated capped RNA after alpha and beta phosphates to form N(7)-methyl-GDP. Shows low activity towards unmethylated capped RNA. This Xenopus laevis (African clawed frog) protein is m7GpppN-mRNA hydrolase NUDT17 (nudt17).